The following is a 304-amino-acid chain: Ribosomal RNA large subunit methyltransferase F (304 aa).

This sequence belongs to the methyltransferase superfamily. METTL16/RlmF family.

It localises to the cytoplasm. It carries out the reaction adenosine(1618) in 23S rRNA + S-adenosyl-L-methionine = N(6)-methyladenosine(1618) in 23S rRNA + S-adenosyl-L-homocysteine + H(+). Specifically methylates the adenine in position 1618 of 23S rRNA. The polypeptide is Ribosomal RNA large subunit methyltransferase F (Klebsiella pneumoniae (strain 342)).